The chain runs to 202 residues: Recombination protein RecR (202 aa).

The segment at 61–76 adopts a C4-type zinc-finger fold; it reads CARCNSFTEDDICATC. A Toprim domain is found at 84-179; it reads SVLCVVETPA…KVTRLARGVP (96 aa).

Belongs to the RecR family.

May play a role in DNA repair. It seems to be involved in an RecBC-independent recombinational process of DNA repair. It may act with RecF and RecO. The polypeptide is Recombination protein RecR (Bordetella petrii (strain ATCC BAA-461 / DSM 12804 / CCUG 43448)).